Reading from the N-terminus, the 1347-residue chain is Spermatogenesis-associated protein 31A3 (1347 aa).

Residues 23–43 form a helical membrane-spanning segment; the sequence is PWVLDIFLTLVFALGFFFLLL. Disordered regions lie at residues 55–87, 108–142, 154–235, 373–397, 627–658, 900–955, 1084–1161, and 1313–1335; these read PSPS…GREC, HLDK…HEPM, SPDP…STLI, EQDT…GPQK, QDES…EAQK, RGIP…REAV, VHEE…PSVS, and KAVS…SHHH. Positions 60-82 are enriched in basic residues; it reads GKRKCPVGRRRRPRGRMKNHSLR. A compositionally biased stretch (polar residues) spans 165 to 178; the sequence is LASTPSPGPMTTSV. The segment covering 198–211 has biased composition (pro residues); the sequence is PEPPALFPHPPHTP. 2 stretches are compositionally biased toward polar residues: residues 627 to 651 and 927 to 948; these read QDES…STGE and LTYS…SSKA. 2 stretches are compositionally biased toward basic and acidic residues: residues 1108-1127 and 1137-1146; these read HKSE…RLEG and RKTEDTHQDE.

This sequence belongs to the SPATA31 family.

Its subcellular location is the membrane. May play a role in spermatogenesis. The chain is Spermatogenesis-associated protein 31A3 (SPATA31A3) from Homo sapiens (Human).